The chain runs to 397 residues: MAKAKFERTKPHVNIGTIGHIDHGKTTLTAAITKVLHDAFPDLNEASAFDQIDKAPEERQRGITISIAHVEYQTETRHYAHVDCPGHADYIKNMITGAAQMDGAILVVAATDGPMPQTKEHVLLARQVGVPYIVVALNKADMVDDEEILELVELEVRELLSEYEFPGDDLPVVRVSALKALEGDKEWGQSVLNLMQAVDENIPEPERDVDKPFLMPIEDVFTITGRGTVVTGRIERGVLKVNETVDIIGIKTEKTTTTVTGIEMFRKLLDEGQAGENVGLLLRGIKREDVERGQVIIKPGSVTPHTEFEAQAYILSKDEGGRHTPFFNNYRPQFYFRTTDVTGVVTLPEGTEMVMPGDNTEMKVELIQPVAMEEGLKFAIREGGRTVGAGQVTKINK.

The tr-type G domain maps to 10–206 (KPHVNIGTIG…AVDENIPEPE (197 aa)). Positions 19–26 (GHIDHGKT) are G1. Position 19 to 26 (19 to 26 (GHIDHGKT)) interacts with GTP. Mg(2+) is bound at residue T26. The interval 62 to 66 (GITIS) is G2. The segment at 83–86 (DCPG) is G3. GTP is bound by residues 83–87 (DCPGH) and 138–141 (NKAD). Residues 138–141 (NKAD) form a G4 region. Residues 176 to 178 (SAL) are G5. Phosphothreonine is present on T386.

Belongs to the TRAFAC class translation factor GTPase superfamily. Classic translation factor GTPase family. EF-Tu/EF-1A subfamily. Monomer. Post-translationally, phosphorylated on threonine and serine.

The protein localises to the cytoplasm. It carries out the reaction GTP + H2O = GDP + phosphate + H(+). GTP hydrolase that promotes the GTP-dependent binding of aminoacyl-tRNA to the A-site of ribosomes during protein biosynthesis. The polypeptide is Elongation factor Tu-1 (Streptomyces collinus).